Here is a 37-residue protein sequence, read N- to C-terminus: Kappa-actitoxin-Bgr1a (37 aa).

One can recognise a ShKT domain in the interval 2–37 (CRDWFKETACRHAKSLGNCRTSQKYRANCAKTCELC). Disulfide bonds link C2-C37, C11-C30, and C20-C34. A crucial for binding to potassium channels region spans residues 25–26 (KY).

It belongs to the sea anemone type 1 potassium channel toxin family. Type 1b subfamily.

The protein localises to the secreted. It is found in the nematocyst. Its function is as follows. Inhibits voltage-dependent potassium channels of the Kv1 family (Kv1.1/KCNA1 (Kd=6 nM), Kv1.2/KCNA2 (Kd=15 nM), Kv1.3/KCNA3 (Kd=10-39 nM), Kv1.6/KCNA6, and KCa3.1/KCNN4 (Kd=172 nM)). The polypeptide is Kappa-actitoxin-Bgr1a (Bunodosoma granuliferum (Red warty sea anemone)).